A 330-amino-acid polypeptide reads, in one-letter code: Ketol-acid reductoisomerase (NADP(+)) (330 aa).

The region spanning M1–T181 is the KARI N-terminal Rossmann domain. NADP(+)-binding positions include Y24–Q27, R47, S52, and D82–Q85. H107 is a catalytic residue. G133 is an NADP(+) binding site. In terms of domain architecture, KARI C-terminal knotted spans T182–E327. Residues D190, E194, E226, and E230 each contribute to the Mg(2+) site. Residue S251 coordinates substrate.

This sequence belongs to the ketol-acid reductoisomerase family. Mg(2+) serves as cofactor.

It catalyses the reaction (2R)-2,3-dihydroxy-3-methylbutanoate + NADP(+) = (2S)-2-acetolactate + NADPH + H(+). It carries out the reaction (2R,3R)-2,3-dihydroxy-3-methylpentanoate + NADP(+) = (S)-2-ethyl-2-hydroxy-3-oxobutanoate + NADPH + H(+). It participates in amino-acid biosynthesis; L-isoleucine biosynthesis; L-isoleucine from 2-oxobutanoate: step 2/4. Its pathway is amino-acid biosynthesis; L-valine biosynthesis; L-valine from pyruvate: step 2/4. In terms of biological role, involved in the biosynthesis of branched-chain amino acids (BCAA). Catalyzes an alkyl-migration followed by a ketol-acid reduction of (S)-2-acetolactate (S2AL) to yield (R)-2,3-dihydroxy-isovalerate. In the isomerase reaction, S2AL is rearranged via a Mg-dependent methyl migration to produce 3-hydroxy-3-methyl-2-ketobutyrate (HMKB). In the reductase reaction, this 2-ketoacid undergoes a metal-dependent reduction by NADPH to yield (R)-2,3-dihydroxy-isovalerate. The polypeptide is Ketol-acid reductoisomerase (NADP(+)) (Methanococcus maripaludis (strain C6 / ATCC BAA-1332)).